The primary structure comprises 349 residues: Prostaglandin reductase 1 (349 aa).

Thr-18 is modified (phosphothreonine). Ser-20 carries the phosphoserine modification. NADP(+) contacts are provided by residues 152–155 (GAVG), Lys-178, Tyr-193, Asn-217, 239–245 (CGAISMY), 270–272 (FIF), and Asn-321. At Lys-178 the chain carries N6-(2-hydroxyisobutyryl)lysine; alternate. Residue Lys-178 is modified to N6-acetyllysine; alternate.

This sequence belongs to the NADP-dependent oxidoreductase L4BD family. In terms of assembly, monomer or homodimer.

Its subcellular location is the cytoplasm. It carries out the reaction 13,14-dihydro-15-oxo-prostaglandin E1 + NADP(+) = 15-oxoprostaglandin E1 + NADPH + H(+). The catalysed reaction is 13,14-dihydro-15-oxo-prostaglandin E2 + NADP(+) = 15-oxoprostaglandin E2 + NADPH + H(+). It catalyses the reaction 13,14-dihydro-15-oxo-prostaglandin F1alpha + NADP(+) = 15-oxoprostaglandin F1alpha + NADPH + H(+). The enzyme catalyses 13,14-dihydro-15-oxo-PGF2alpha + NADP(+) = 15-oxoprostaglandin F2alpha + NADPH + H(+). It carries out the reaction leukotriene B4 + NADP(+) = 12-oxo-leukotriene B4 + NADPH + H(+). The catalysed reaction is 20-hydroxy-leukotriene B4 + NADP(+) = 12-oxo-20-hydroxy-leukotriene B4 + NADPH + H(+). It catalyses the reaction 6-trans-leukotriene B4 + NADP(+) = 12-oxo-(5S)-hydroxy-(6E,8E,10E,14Z)-eicosatetraenoate + NADPH + H(+). The enzyme catalyses (5S,12S)-dihydroxy-(6E,10E,12E,14Z)-eicosatetraenoate + NADP(+) = 12-oxo-(5S)-hydroxy-(6E,8E,10E,14Z)-eicosatetraenoate + NADPH + H(+). It carries out the reaction an n-alkanal + NADP(+) = an alk-2-enal + NADPH + H(+). The catalysed reaction is hexanal + NADP(+) = (E)-hex-2-enal + NADPH + H(+). It catalyses the reaction octanal + NADP(+) = (2E)-octenal + NADPH + H(+). The enzyme catalyses decanal + NADP(+) = (2E)-decenal + NADPH + H(+). It carries out the reaction dodecanal + NADP(+) = (2E)-dodecenal + NADPH + H(+). The catalysed reaction is 4-hydroxynonanal + NADP(+) = (E)-4-hydroxynon-2-enal + NADPH + H(+). It catalyses the reaction pentan-2-one + NADP(+) = (E)-pent-3-en-2-one + NADPH + H(+). The enzyme catalyses nonan-2-one + NADP(+) = (3E)-nonen-2-one + NADPH + H(+). In terms of biological role, NAD(P)H-dependent oxidoreductase involved in metabolic inactivation of pro- and anti-inflammatory eicosanoids: prostaglandins (PG), leukotrienes (LT) and lipoxins (LX). Catalyzes with high efficiency the reduction of the 13,14 double bond of 15-oxoPGs, including 15-oxo-PGE1, 15-oxo-PGE2, 15-oxo-PGF1-alpha and 15-oxo-PGF2-alpha. Catalyzes with lower efficiency the oxidation of the hydroxyl group at C12 of LTB4 and its derivatives, converting them into biologically less active 12-oxo-LTB4 metabolites. Reduces 15-oxo-LXA4 to 13,14 dihydro-15-oxo-LXA4, enhancing neutrophil recruitment at the inflammatory site. Plays a role in metabolic detoxification of alkenals and ketones. Reduces alpha,beta-unsaturated alkenals and ketones, particularly those with medium-chain length, showing highest affinity toward (2E)-decenal and (3E)-3-nonen-2-one. May inactivate 4-hydroxy-2-nonenal, a cytotoxic lipid constituent of oxidized low-density lipoprotein particles. The protein is Prostaglandin reductase 1 (PTGR1) of Oryctolagus cuniculus (Rabbit).